The primary structure comprises 132 residues: Agouti-signaling protein (132 aa).

The first 22 residues, 1 to 22 (MDVTRLLLATLLVFLCFFTAYS), serve as a signal peptide directing secretion. A glycan (N-linked (GlcNAc...) asparagine) is linked at Asn-39. Residues 62 to 88 (ISRKEAEKKRSSKKEASMKKVARPRTP) form a disordered region. The segment covering 63-79 (SRKEAEKKRSSKKEASM) has biased composition (basic and acidic residues). 5 cysteine pairs are disulfide-bonded: Cys-93–Cys-108, Cys-100–Cys-114, Cys-107–Cys-125, Cys-111–Cys-132, and Cys-116–Cys-123. The Agouti domain occupies 93 to 132 (CVATRDSCKPPAPACCDPCASCQCRFFRSACSCRVLSLNC).

It localises to the secreted. In terms of biological role, involved in the regulation of melanogenesis. The binding of ASP to MC1R precludes alpha-MSH initiated signaling and thus blocks production of cAMP, leading to a down-regulation of eumelanogenesis (brown/black pigment) and thus increasing synthesis of pheomelanin (yellow/red pigment). In Chlorocebus aethiops (Green monkey), this protein is Agouti-signaling protein (ASIP).